The chain runs to 492 residues: Cytochrome P450 2A12 (492 aa).

Cysteine 437 lines the heme pocket.

Belongs to the cytochrome P450 family. Requires heme as cofactor. As to expression, liver.

The protein localises to the endoplasmic reticulum membrane. It is found in the microsome membrane. The enzyme catalyses an organic molecule + reduced [NADPH--hemoprotein reductase] + O2 = an alcohol + oxidized [NADPH--hemoprotein reductase] + H2O + H(+). Its function is as follows. Highly active in the 7-alpha-hydroxylation of testosterone. The polypeptide is Cytochrome P450 2A12 (Cyp2a12) (Mus musculus (Mouse)).